Consider the following 312-residue polypeptide: GTP cyclohydrolase MptA (312 aa).

This sequence belongs to the GTP cyclohydrolase IV family. In terms of assembly, homodimer. It depends on Fe(2+) as a cofactor.

It catalyses the reaction GTP + H2O = 7,8-dihydroneopterin 2',3'-cyclic phosphate + formate + diphosphate + H(+). It participates in cofactor biosynthesis; 5,6,7,8-tetrahydromethanopterin biosynthesis. In terms of biological role, converts GTP to 7,8-dihydro-D-neopterin 2',3'-cyclic phosphate, the first intermediate in the biosynthesis of coenzyme methanopterin. This chain is GTP cyclohydrolase MptA, found in Methanococcus vannielii (strain ATCC 35089 / DSM 1224 / JCM 13029 / OCM 148 / SB).